A 473-amino-acid chain; its full sequence is NAC domain-containing protein 68 (473 aa).

The NAC domain maps to 4-154; it reads GLIGYRFSPT…KYVVCQVKYK (151 aa). A DNA-binding region spans residues 108-160; that stretch reads IGIKKTLVYHEGKSPHGVRTPWVMHEYHITCLPHHKRKYVVCQVKYKGEAAEI. Residues 326 to 380 form a disordered region; that stretch reads DHMPRKPVTGTIDYSSDSGSDAGSISTTSYQGTSSPNISVGSSSRHLSSCSSTDS. 2 stretches are compositionally biased toward low complexity: residues 340 to 354 and 364 to 379; these read SSDS…STTS and SVGS…SSTD. Residues 446 to 468 form a helical membrane-spanning segment; it reads FIYLMKMIIGNIISVLLPVKRLI.

It localises to the membrane. Its subcellular location is the nucleus. Transcription activator activated by proteolytic cleavage through regulated intramembrane proteolysis (RIP) mediated by calpain or its functional homolog. Regulates cytokinin signaling during cell division. In Arabidopsis thaliana (Mouse-ear cress), this protein is NAC domain-containing protein 68 (NAC68).